The sequence spans 387 residues: MMKQISILGSTGSIGRQTLEVVNSFPEELNVVALAAGRNRELFLEQCKAYKPLLVSLQLEEDALWLKEHLIKEKLRPEIRYGLDGLVAVATCHEAVVVVTALSGAIGLVPTCAAIKASKKIALANKETLVAAGQYVTKLAEEYKVEILPVDSEHSAIWQCLHGENRSAIRKIQLTASGGPFRQLNRQELENVTPEMALKHPNWSMGQKITIDSATLMNKGLEVIEAKWLFGVDYDDINVVVHPQSVIHSMVEYGDGSLLAHLGMPDMRIPIQYALSYPERWFNHLPKLNLTELKGLTFEEPDTNRFPSLSLAYQAGKIGGTAPAVLNAANEVAVHAFLAGQIKFMQIPSIVKRTLNEHQFQGSPVLEEILEIDGWAREEANKIIRNC.

NADPH is bound by residues Thr-11, Gly-12, Ser-13, Ile-14, Gly-37, Arg-38, Asn-39, and Asn-125. Lys-126 serves as a coordination point for 1-deoxy-D-xylulose 5-phosphate. Glu-127 is an NADPH binding site. Asp-151 serves as a coordination point for Mn(2+). 1-deoxy-D-xylulose 5-phosphate is bound by residues Ser-152, Glu-153, Ser-177, and His-200. Residue Glu-153 participates in Mn(2+) binding. Gly-206 is an NADPH binding site. Ser-213, Asn-218, Lys-219, and Glu-222 together coordinate 1-deoxy-D-xylulose 5-phosphate. Residue Glu-222 coordinates Mn(2+).

Belongs to the DXR family. Requires Mg(2+) as cofactor. It depends on Mn(2+) as a cofactor.

The catalysed reaction is 2-C-methyl-D-erythritol 4-phosphate + NADP(+) = 1-deoxy-D-xylulose 5-phosphate + NADPH + H(+). The protein operates within isoprenoid biosynthesis; isopentenyl diphosphate biosynthesis via DXP pathway; isopentenyl diphosphate from 1-deoxy-D-xylulose 5-phosphate: step 1/6. In terms of biological role, catalyzes the NADPH-dependent rearrangement and reduction of 1-deoxy-D-xylulose-5-phosphate (DXP) to 2-C-methyl-D-erythritol 4-phosphate (MEP). This chain is 1-deoxy-D-xylulose 5-phosphate reductoisomerase, found in Desulforamulus reducens (strain ATCC BAA-1160 / DSM 100696 / MI-1) (Desulfotomaculum reducens).